Reading from the N-terminus, the 584-residue chain is Alkaline nuclease (584 aa).

The disordered stretch occupies residues Gly-409–Glu-430.

The protein belongs to the herpesviridae alkaline nuclease family. Interacts with major DNA-binding protein; this interaction increases the nuclease processivity of the alkaline exonuclease.

It localises to the host nucleus. Its subcellular location is the host cytoplasm. Plays a role in processing non linear or branched viral DNA intermediates in order to promote the production of mature packaged unit-length linear progeny viral DNA molecules. Exhibits endonuclease and exonuclease activities and accepts both double-stranded and single-stranded DNA as substrate. Exonuclease digestion of DNA is in the 5'-&gt; 3' direction and the products are 5'-monophosphate nucleosides. Additionally, forms a recombinase with the major DNA-binding protein, which displays strand exchange activity. In Human cytomegalovirus (strain AD169) (HHV-5), this protein is Alkaline nuclease (UL98).